Consider the following 529-residue polypeptide: Peptide chain release factor 3 (529 aa).

In terms of domain architecture, tr-type G spans A11 to M280. Residues S20–T27, D88–H92, and N142–D145 each bind GTP.

This sequence belongs to the TRAFAC class translation factor GTPase superfamily. Classic translation factor GTPase family. PrfC subfamily.

It is found in the cytoplasm. Its function is as follows. Increases the formation of ribosomal termination complexes and stimulates activities of RF-1 and RF-2. It binds guanine nucleotides and has strong preference for UGA stop codons. It may interact directly with the ribosome. The stimulation of RF-1 and RF-2 is significantly reduced by GTP and GDP, but not by GMP. In Salmonella agona (strain SL483), this protein is Peptide chain release factor 3.